The sequence spans 432 residues: Adenylosuccinate synthetase (432 aa).

GTP contacts are provided by residues 13-19 (GDEGKGK) and 41-43 (GHT). D14 acts as the Proton acceptor in catalysis. Mg(2+) is bound by residues D14 and G41. IMP-binding positions include 14-17 (DEGK), 39-42 (NAGH), T130, R144, Q225, T240, and R304. The Proton donor role is filled by H42. Residue 300–306 (AVTGRPR) participates in substrate binding. GTP-binding positions include R306, 332 to 334 (KLD), and 415 to 417 (STG).

This sequence belongs to the adenylosuccinate synthetase family. As to quaternary structure, homodimer. The cofactor is Mg(2+).

It localises to the cytoplasm. It catalyses the reaction IMP + L-aspartate + GTP = N(6)-(1,2-dicarboxyethyl)-AMP + GDP + phosphate + 2 H(+). The protein operates within purine metabolism; AMP biosynthesis via de novo pathway; AMP from IMP: step 1/2. In terms of biological role, plays an important role in the de novo pathway of purine nucleotide biosynthesis. Catalyzes the first committed step in the biosynthesis of AMP from IMP. The protein is Adenylosuccinate synthetase of Actinobacillus pleuropneumoniae serotype 3 (strain JL03).